The following is a 545-amino-acid chain: CTP synthase (545 aa).

Residues 1-266 (MTHFIFVTGG…DDLICERFGF (266 aa)) are amidoligase domain. Position 13 (Ser13) interacts with CTP. Position 13 (Ser13) interacts with UTP. ATP contacts are provided by residues 14–19 (SLGKGI) and Asp71. Residues Asp71 and Glu140 each coordinate Mg(2+). CTP-binding positions include 147 to 149 (DIE), 187 to 192 (KTKPTQ), and Lys223. UTP contacts are provided by residues 187 to 192 (KTKPTQ) and Lys223. 239–241 (KDA) provides a ligand contact to ATP. Positions 292 to 543 (RVAMVGKYVE…IDAAKTQHQK (252 aa)) constitute a Glutamine amidotransferase type-1 domain. An L-glutamine-binding site is contributed by Gly353. Residue Cys380 is the Nucleophile; for glutamine hydrolysis of the active site. Residues 381–384 (LGMQ), Glu404, and Arg471 contribute to the L-glutamine site. Residues His516 and Glu518 contribute to the active site.

It belongs to the CTP synthase family. In terms of assembly, homotetramer.

It catalyses the reaction UTP + L-glutamine + ATP + H2O = CTP + L-glutamate + ADP + phosphate + 2 H(+). It carries out the reaction L-glutamine + H2O = L-glutamate + NH4(+). The enzyme catalyses UTP + NH4(+) + ATP = CTP + ADP + phosphate + 2 H(+). The protein operates within pyrimidine metabolism; CTP biosynthesis via de novo pathway; CTP from UDP: step 2/2. With respect to regulation, allosterically activated by GTP, when glutamine is the substrate; GTP has no effect on the reaction when ammonia is the substrate. The allosteric effector GTP functions by stabilizing the protein conformation that binds the tetrahedral intermediate(s) formed during glutamine hydrolysis. Inhibited by the product CTP, via allosteric rather than competitive inhibition. Catalyzes the ATP-dependent amination of UTP to CTP with either L-glutamine or ammonia as the source of nitrogen. Regulates intracellular CTP levels through interactions with the four ribonucleotide triphosphates. This chain is CTP synthase, found in Acinetobacter baumannii (strain AB307-0294).